The sequence spans 149 residues: Protein DOWN-REGULATED IN DIF1 11 (149 aa).

An N-terminal signal peptide occupies residues 1-22; it reads MEKAILITFLIATTSMVYQTIG.

In terms of tissue distribution, mostly expressed in embryo sac cells. Restricted to synergid cells, especially in the filiform apparatus of mature female gametophyte, via MYB98-mediated transcription regulation. Also detected at low levels in egg and central cells.

This Arabidopsis thaliana (Mouse-ear cress) protein is Protein DOWN-REGULATED IN DIF1 11.